Consider the following 497-residue polypeptide: Protein DML1 (497 aa).

It belongs to the misato family.

Its subcellular location is the mitochondrion. Involved in the partitioning of the mitochondrial organelle and mitochondrial DNA (mtDNA) inheritance. The protein is Protein DML1 (DML1) of Gibberella zeae (strain ATCC MYA-4620 / CBS 123657 / FGSC 9075 / NRRL 31084 / PH-1) (Wheat head blight fungus).